We begin with the raw amino-acid sequence, 121 residues long: 18 kDa learning-associated protein of slug (121 aa).

Disordered regions lie at residues 44-67 and 95-121; these read TMKT…GSME and AVKK…AIKW. Residues 45-64 show a composition bias toward polar residues; sequence MKTTEPIQENKTSEGTSTDG.

The protein belongs to the learning-associated protein family. As to expression, expressed predominantly in cerebral ganglia (at protein level). The mRNA is highly expressed in cerebral ganglia, and is detected at lower levels in visceral-pedal ganglia, head, and body, but is not detected in the tail.

The protein resides in the cytoplasm. Its subcellular location is the secreted. May be involved in modulating long-term memory formation and retention, at least with respect to odor-taste associative learning. The protein is 18 kDa learning-associated protein of slug of Lehmannia marginata (Tree slug).